The primary structure comprises 122 residues: S-adenosylmethionine decarboxylase proenzyme (122 aa).

Ser69 (schiff-base intermediate with substrate; via pyruvic acid) is an active-site residue. The residue at position 69 (Ser69) is a Pyruvic acid (Ser); by autocatalysis. The Proton acceptor; for processing activity role is filled by His74. Residue Cys89 is the Proton donor; for catalytic activity of the active site.

The protein belongs to the prokaryotic AdoMetDC family. Type 1 subfamily. As to quaternary structure, heterotetramer of two alpha and two beta chains arranged as a dimer of alpha/beta heterodimers. The cofactor is pyruvate. Post-translationally, is synthesized initially as an inactive proenzyme. Formation of the active enzyme involves a self-maturation process in which the active site pyruvoyl group is generated from an internal serine residue via an autocatalytic post-translational modification. Two non-identical subunits are generated from the proenzyme in this reaction, and the pyruvate is formed at the N-terminus of the alpha chain, which is derived from the carboxyl end of the proenzyme. The post-translation cleavage follows an unusual pathway, termed non-hydrolytic serinolysis, in which the side chain hydroxyl group of the serine supplies its oxygen atom to form the C-terminus of the beta chain, while the remainder of the serine residue undergoes an oxidative deamination to produce ammonia and the pyruvoyl group blocking the N-terminus of the alpha chain.

It carries out the reaction S-adenosyl-L-methionine + H(+) = S-adenosyl 3-(methylsulfanyl)propylamine + CO2. The protein operates within amine and polyamine biosynthesis; S-adenosylmethioninamine biosynthesis; S-adenosylmethioninamine from S-adenosyl-L-methionine: step 1/1. In terms of biological role, catalyzes the decarboxylation of S-adenosylmethionine to S-adenosylmethioninamine (dcAdoMet), the propylamine donor required for the synthesis of the polyamines spermine and spermidine from the diamine putrescine. The chain is S-adenosylmethionine decarboxylase proenzyme from Saccharolobus islandicus (strain L.S.2.15 / Lassen #1) (Sulfolobus islandicus).